The following is a 946-amino-acid chain: Bifunctional glutamine synthetase adenylyltransferase/adenylyl-removing enzyme (946 aa).

Residues 1-440 (MKPLSSPLQQ…VFNELIGDDE (440 aa)) are adenylyl removase. The tract at residues 449–946 (SEQWRELWQD…ASWQKWLVEE (498 aa)) is adenylyl transferase.

This sequence belongs to the GlnE family. The cofactor is Mg(2+).

The catalysed reaction is [glutamine synthetase]-O(4)-(5'-adenylyl)-L-tyrosine + phosphate = [glutamine synthetase]-L-tyrosine + ADP. The enzyme catalyses [glutamine synthetase]-L-tyrosine + ATP = [glutamine synthetase]-O(4)-(5'-adenylyl)-L-tyrosine + diphosphate. In terms of biological role, involved in the regulation of glutamine synthetase GlnA, a key enzyme in the process to assimilate ammonia. When cellular nitrogen levels are high, the C-terminal adenylyl transferase (AT) inactivates GlnA by covalent transfer of an adenylyl group from ATP to specific tyrosine residue of GlnA, thus reducing its activity. Conversely, when nitrogen levels are low, the N-terminal adenylyl removase (AR) activates GlnA by removing the adenylyl group by phosphorolysis, increasing its activity. The regulatory region of GlnE binds the signal transduction protein PII (GlnB) which indicates the nitrogen status of the cell. In Escherichia coli O8 (strain IAI1), this protein is Bifunctional glutamine synthetase adenylyltransferase/adenylyl-removing enzyme.